The chain runs to 347 residues: 8-amino-8-demethylriboflavin N,N-dimethyltransferase (347 aa).

Residues D209 and G235–F237 contribute to the S-adenosyl-L-methionine site.

This sequence belongs to the class I-like SAM-binding methyltransferase superfamily. Cation-independent O-methyltransferase family. Homodimer.

It carries out the reaction 8-amino-8-demethylriboflavin + 2 S-adenosyl-L-methionine = roseoflavin + 2 S-adenosyl-L-homocysteine + 2 H(+). Its pathway is antibiotic biosynthesis. Its function is as follows. Catalyzes the S-adenosyl methionine-dependent conversion of 8-amino-8-demethyl-D-riboflavin (AF) into 8-methylamino-8-demethyl-D-riboflavin (MAF) and roseoflavin (RoF), the last two steps in the biosynthesis of the antibiotic roseoflavin. This Streptomyces davaonensis (strain DSM 101723 / JCM 4913 / KCC S-0913 / 768) protein is 8-amino-8-demethylriboflavin N,N-dimethyltransferase.